Consider the following 873-residue polypeptide: Coatomer subunit gamma-2 (873 aa).

Over residues 1–11 (MIKKFDKKDEE) the composition is skewed to basic and acidic residues. Positions 1–21 (MIKKFDKKDEESGSGSNPFQH) are disordered. 6 HEAT repeats span residues 64–101 (TEATEAFFAMTRLFQSNDQTLRRMCYLTIKEMANISED), 283–320 (RELAPAVSVLQLFCSSPKAALRYAAVRTLNKVAMKHPS), 321–355 (AVTACNLDLENLITDSNRSIATLAITTLLKTGSES), 356–392 (SVDRLMKQISSFVSEISDEFKVVVVQAISALCQKYPR), 395–430 (SVMMNFLSNMLRDDGGFEYKRAIVDCIISIIEENPE), and 467–504 (PTPSKYIRFIFNRVVLESEAVRAAAVSALAKFGAQNDD).

Belongs to the COPG family. Oligomeric complex.

It localises to the cytoplasm. Its subcellular location is the golgi apparatus membrane. The protein localises to the cytoplasmic vesicle. It is found in the COPI-coated vesicle membrane. Its function is as follows. The coatomer is a cytosolic protein complex that binds to dilysine motifs and reversibly associates with Golgi non-clathrin-coated vesicles, which further mediate biosynthetic protein transport from the ER, via the Golgi up to the trans Golgi network. Coatomer complex is required for budding from Golgi membranes, and is essential for the retrograde Golgi-to-ER transport of dilysine-tagged proteins. This is Coatomer subunit gamma-2 (copg2) from Danio rerio (Zebrafish).